A 640-amino-acid polypeptide reads, in one-letter code: Chaperone protein DnaK (640 aa).

The residue at position 201 (T201) is a Phosphothreonine; by autocatalysis. Residues 603–621 (AASADQGGAPGADAGNAGK) are compositionally biased toward low complexity. The segment at 603–625 (AASADQGGAPGADAGNAGKAQDD) is disordered.

Belongs to the heat shock protein 70 family.

In terms of biological role, acts as a chaperone. The polypeptide is Chaperone protein DnaK (Stenotrophomonas maltophilia (strain K279a)).